A 500-amino-acid chain; its full sequence is Centrosomal protein of 57 kDa (500 aa).

Residues 1 to 17 (MAAASVSAASGSHLSNS) show a composition bias toward low complexity. Disordered stretches follow at residues 1-34 (MAAA…HSSS) and 43-62 (KPFL…LAYP). The span at 18–34 (FAEPSRSNGSMVRHSSS) shows a compositional bias: polar residues. Phosphoserine is present on residues S53 and S55. The segment at 58–239 (TLAYPESNSR…KAAELQTGLE (182 aa)) is centrosome localization domain (CLD). 2 coiled-coil regions span residues 63-242 (ESNS…ETNR) and 392-492 (ELKD…NSLQ). Positions 277 to 491 (GAQPHYRLCL…KDMQSIQNSL (215 aa)) are mediates interaction with microtubules. Over residues 434–450 (KKELKATKKTLDEERNS) the composition is skewed to basic and acidic residues. Residues 434 to 472 (KKELKATKKTLDEERNSSSRSGITGTTNKKDFMKLRPGE) are disordered. Polar residues predominate over residues 451–460 (SSRSGITGTT). Residues 461 to 471 (NKKDFMKLRPG) show a composition bias toward basic and acidic residues.

This sequence belongs to the translokin family. In terms of assembly, homodimer and homooligomer. Interacts with microtubules. Interacts with FGF2 and RAP80. Does not interact with FGF1 or FGF2 isoform 24 kDa. Ubiquitous.

It localises to the nucleus. Its subcellular location is the cytoplasm. The protein resides in the cytoskeleton. It is found in the microtubule organizing center. The protein localises to the centrosome. Functionally, centrosomal protein which may be required for microtubule attachment to centrosomes. May act by forming ring-like structures around microtubules. Mediates nuclear translocation and mitogenic activity of the internalized growth factor FGF2, but that of FGF1. The protein is Centrosomal protein of 57 kDa (CEP57) of Homo sapiens (Human).